A 234-amino-acid chain; its full sequence is Adenosine 5'-phosphosulfate reductase (234 aa).

4 residues coordinate [4Fe-4S] cluster: Cys-120, Cys-121, Cys-203, and Cys-206. Cys-229 acts as the Nucleophile; cysteine thiosulfonate intermediate in catalysis.

This sequence belongs to the PAPS reductase family. CysH subfamily. It depends on [4Fe-4S] cluster as a cofactor.

Its subcellular location is the cytoplasm. The catalysed reaction is [thioredoxin]-disulfide + sulfite + AMP + 2 H(+) = adenosine 5'-phosphosulfate + [thioredoxin]-dithiol. Its pathway is sulfur metabolism; hydrogen sulfide biosynthesis; sulfite from sulfate. Its function is as follows. Catalyzes the formation of sulfite from adenosine 5'-phosphosulfate (APS) using thioredoxin as an electron donor. The chain is Adenosine 5'-phosphosulfate reductase from Bacillus cereus (strain B4264).